Consider the following 702-residue polypeptide: Ribosomal RNA large subunit methyltransferase K/L (702 aa).

The THUMP domain occupies Leu43–Leu154.

Belongs to the methyltransferase superfamily. RlmKL family.

The protein localises to the cytoplasm. It catalyses the reaction guanosine(2445) in 23S rRNA + S-adenosyl-L-methionine = N(2)-methylguanosine(2445) in 23S rRNA + S-adenosyl-L-homocysteine + H(+). It carries out the reaction guanosine(2069) in 23S rRNA + S-adenosyl-L-methionine = N(2)-methylguanosine(2069) in 23S rRNA + S-adenosyl-L-homocysteine + H(+). Functionally, specifically methylates the guanine in position 2445 (m2G2445) and the guanine in position 2069 (m7G2069) of 23S rRNA. In Salmonella choleraesuis (strain SC-B67), this protein is Ribosomal RNA large subunit methyltransferase K/L.